Consider the following 541-residue polypeptide: Protein wntless homolog (541 aa).

Over 1-15 (MAGAIIENMSTKKLC) the chain is Cytoplasmic. A helical transmembrane segment spans residues 16-36 (IVGGILLVFQIVAFLVGGLIA). Residues 37–232 (PAPTTAVSYV…GIHQNGGFTK (196 aa)) lie on the Lumenal side of the membrane. Positions 101-202 (MEMSPWFQFM…KYYLLNIRLP (102 aa)) are interaction with Wnt proteins. Residues 233–253 (VWFAMKTFLTPSIFIIMVWYW) form a helical membrane-spanning segment. At 254–268 (RRITMMSRPPVLLEK) the chain is on the cytoplasmic side. The helical transmembrane segment at 269–289 (VIFALGISMTFINIPVEWFSI) threads the bilayer. Residues 290 to 303 (GFDWTWMLLFGDIR) are Lumenal-facing. The chain crosses the membrane as a helical span at residues 304–324 (QGIFYAMLLSFWIIFCGEHMM). Over 325–331 (DQHERNH) the chain is Cytoplasmic. The chain crosses the membrane as a helical span at residues 332–352 (IAGYWKQVGPIAVGSFCLFIF). The Lumenal segment spans residues 353–380 (DMCERGVQLTNPFYSIWTTDVGTELAMA). The helical transmembrane segment at 381 to 401 (FIIVAGICLCLYFLFLCFMVF) threads the bilayer. The Cytoplasmic portion of the chain corresponds to 402 to 431 (QVFRNISGKQSSLPAMSKVRRLHYEGLIFR). A helical transmembrane segment spans residues 432–452 (FKFLMLITLACAAMTVIFFIV). The Lumenal portion of the chain corresponds to 453-471 (SQVTEGHWKWGGVTVQVSS). Residues 472–492 (AFFTGIYGMWNLYVFALMFLY) traverse the membrane as a helical segment. Residues 493–541 (APSHKNYGEDQSNGDLGVHSGEELQLTTTITHVDGPTEIYKLTRKEAQE) lie on the Cytoplasmic side of the membrane.

Belongs to the wntless family. Interacts with WNT3A. Interacts with WNT1, WNT3 and WNT5A. Post-translationally, N-glycosylated. Expressed in the brain, skeletal muscle, heart muscle, lung, gut, liver, and kidney (at protein level). In the brain, expressed in the cortex, striatum, ventral tegmentum, nucleus accumbens and to a lesser extent in the Purkinjie cells in the cerebellum. Expressed in eye iridocorneal angle.

The protein resides in the golgi apparatus membrane. Its subcellular location is the cytoplasmic vesicle membrane. It localises to the cell membrane. The protein localises to the endoplasmic reticulum membrane. It is found in the early endosome membrane. In terms of biological role, regulates Wnt proteins sorting and secretion in a feedback regulatory mechanism. This reciprocal interaction plays a key role in the regulation of expression, subcellular location, binding and organelle-specific association of Wnt proteins. Also plays an important role in establishment of the anterior-posterior body axis formation during development. This is Protein wntless homolog (Wls) from Rattus norvegicus (Rat).